The primary structure comprises 777 residues: Endonuclease MutS2 (777 aa).

328-335 (GPNTGGKT) provides a ligand contact to ATP. In terms of domain architecture, Smr spans 702–777 (LDLRGKRYEE…GSGATIVIFK (76 aa)).

It belongs to the DNA mismatch repair MutS family. MutS2 subfamily. As to quaternary structure, homodimer. Binds to stalled ribosomes, contacting rRNA.

Endonuclease that is involved in the suppression of homologous recombination and thus may have a key role in the control of bacterial genetic diversity. Its function is as follows. Acts as a ribosome collision sensor, splitting the ribosome into its 2 subunits. Detects stalled/collided 70S ribosomes which it binds and splits by an ATP-hydrolysis driven conformational change. Acts upstream of the ribosome quality control system (RQC), a ribosome-associated complex that mediates the extraction of incompletely synthesized nascent chains from stalled ribosomes and their subsequent degradation. Probably generates substrates for RQC. This Streptococcus gordonii (strain Challis / ATCC 35105 / BCRC 15272 / CH1 / DL1 / V288) protein is Endonuclease MutS2.